Consider the following 122-residue polypeptide: Ribosome-binding factor A (122 aa).

The protein belongs to the RbfA family. Monomer. Binds 30S ribosomal subunits, but not 50S ribosomal subunits or 70S ribosomes.

The protein resides in the cytoplasm. Functionally, one of several proteins that assist in the late maturation steps of the functional core of the 30S ribosomal subunit. Associates with free 30S ribosomal subunits (but not with 30S subunits that are part of 70S ribosomes or polysomes). Required for efficient processing of 16S rRNA. May interact with the 5'-terminal helix region of 16S rRNA. In Anaeromyxobacter sp. (strain Fw109-5), this protein is Ribosome-binding factor A.